A 118-amino-acid polypeptide reads, in one-letter code: Large ribosomal subunit protein uL18 (118 aa).

A disordered region spans residues 1–25 (MISKPDKNKLRQKRHRRVRGKLSGT). The segment covering 10-20 (LRQKRHRRVRG) has biased composition (basic residues).

It belongs to the universal ribosomal protein uL18 family. Part of the 50S ribosomal subunit; part of the 5S rRNA/L5/L18/L25 subcomplex. Contacts the 5S and 23S rRNAs.

Functionally, this is one of the proteins that bind and probably mediate the attachment of the 5S RNA into the large ribosomal subunit, where it forms part of the central protuberance. The polypeptide is Large ribosomal subunit protein uL18 (Streptococcus pneumoniae (strain Hungary19A-6)).